A 269-amino-acid chain; its full sequence is Thymidylate synthase (269 aa).

Residue arginine 26 coordinates dUMP. Histidine 56 lines the (6R)-5,10-methylene-5,6,7,8-tetrahydrofolate pocket. 131–132 (RR) serves as a coordination point for dUMP. Cysteine 151 (nucleophile) is an active-site residue. Residues 171-174 (RSAD), asparagine 182, and 212-214 (HIY) each bind dUMP. Aspartate 174 is a (6R)-5,10-methylene-5,6,7,8-tetrahydrofolate binding site. Alanine 268 lines the (6R)-5,10-methylene-5,6,7,8-tetrahydrofolate pocket.

The protein belongs to the thymidylate synthase family. Bacterial-type ThyA subfamily. As to quaternary structure, homodimer.

Its subcellular location is the cytoplasm. The catalysed reaction is dUMP + (6R)-5,10-methylene-5,6,7,8-tetrahydrofolate = 7,8-dihydrofolate + dTMP. It participates in pyrimidine metabolism; dTTP biosynthesis. In terms of biological role, catalyzes the reductive methylation of 2'-deoxyuridine-5'-monophosphate (dUMP) to 2'-deoxythymidine-5'-monophosphate (dTMP) while utilizing 5,10-methylenetetrahydrofolate (mTHF) as the methyl donor and reductant in the reaction, yielding dihydrofolate (DHF) as a by-product. This enzymatic reaction provides an intracellular de novo source of dTMP, an essential precursor for DNA biosynthesis. This Leifsonia xyli subsp. xyli (strain CTCB07) protein is Thymidylate synthase.